A 453-amino-acid chain; its full sequence is Tubulin delta chain (453 aa).

A GTP-binding site is contributed by 143-149 (AGGTGSG).

It belongs to the tubulin family. In terms of assembly, found in a complex with TEDC1, TEDC2, TUBE1 and TUBD1.

Its subcellular location is the nucleus. It is found in the cytoplasm. The protein localises to the cytoskeleton. It localises to the microtubule organizing center. The protein resides in the centrosome. Its subcellular location is the centriole. It is found in the cell projection. The protein localises to the cilium. Acts as a positive regulator of hedgehog signaling and regulates ciliary function. The polypeptide is Tubulin delta chain (TUBD1) (Homo sapiens (Human)).